Consider the following 343-residue polypeptide: 4-hydroxy-2-oxovalerate aldolase 2 (343 aa).

Residues 5–255 (ITIVDTTLRD…DTGVDLFPLI (251 aa)) enclose the Pyruvate carboxyltransferase domain. Substrate contacts are provided by residues 13–14 (RD), serine 167, and histidine 194. Mn(2+) is bound at residue aspartate 14. Residues histidine 194 and histidine 196 each contribute to the Mn(2+) site. Residue tyrosine 285 coordinates substrate.

The protein belongs to the 4-hydroxy-2-oxovalerate aldolase family.

The enzyme catalyses (S)-4-hydroxy-2-oxopentanoate = acetaldehyde + pyruvate. This chain is 4-hydroxy-2-oxovalerate aldolase 2, found in Rhodococcus jostii (strain RHA1).